Here is a 287-residue protein sequence, read N- to C-terminus: Orotidine 5'-phosphate decarboxylase (287 aa).

Catalysis depends on lysine 95, which acts as the Proton donor.

This sequence belongs to the OMP decarboxylase family. Type 2 subfamily.

It catalyses the reaction orotidine 5'-phosphate + H(+) = UMP + CO2. It participates in pyrimidine metabolism; UMP biosynthesis via de novo pathway; UMP from orotate: step 2/2. This Albidiferax ferrireducens (strain ATCC BAA-621 / DSM 15236 / T118) (Rhodoferax ferrireducens) protein is Orotidine 5'-phosphate decarboxylase.